A 99-amino-acid polypeptide reads, in one-letter code: UPF0473 protein Athe_1150 (99 aa).

This sequence belongs to the UPF0473 family.

This chain is UPF0473 protein Athe_1150, found in Caldicellulosiruptor bescii (strain ATCC BAA-1888 / DSM 6725 / KCTC 15123 / Z-1320) (Anaerocellum thermophilum).